The following is a 408-amino-acid chain: Putative mannan endo-1,4-beta-mannosidase P (408 aa).

The N-terminal stretch at 1-23 (MKCLCFIVLLAIVIAQSYVGVEA) is a signal peptide. N-linked (GlcNAc...) asparagine glycosylation occurs at Asn-73. Substrate-binding residues include Trp-85 and Asn-201. Catalysis depends on Glu-202, which acts as the Proton donor. The active-site Nucleophile is the Glu-322. Trp-364 lines the substrate pocket.

Belongs to the glycosyl hydrolase 5 (cellulase A) family.

It localises to the secreted. The enzyme catalyses Random hydrolysis of (1-&gt;4)-beta-D-mannosidic linkages in mannans, galactomannans and glucomannans.. This Arabidopsis thaliana (Mouse-ear cress) protein is Putative mannan endo-1,4-beta-mannosidase P (MANP).